The sequence spans 224 residues: 7-cyano-7-deazaguanine synthase (224 aa).

Position 10-20 (10-20 (LSGGLDSATVV)) interacts with ATP. The Zn(2+) site is built by Cys-189, Cys-199, Cys-202, and Cys-205.

The protein belongs to the QueC family. Zn(2+) is required as a cofactor.

The catalysed reaction is 7-carboxy-7-deazaguanine + NH4(+) + ATP = 7-cyano-7-deazaguanine + ADP + phosphate + H2O + H(+). The protein operates within purine metabolism; 7-cyano-7-deazaguanine biosynthesis. In terms of biological role, catalyzes the ATP-dependent conversion of 7-carboxy-7-deazaguanine (CDG) to 7-cyano-7-deazaguanine (preQ(0)). In Stutzerimonas stutzeri (strain A1501) (Pseudomonas stutzeri), this protein is 7-cyano-7-deazaguanine synthase.